The chain runs to 510 residues: Serine carboxypeptidase 1 (510 aa).

Positions 1 to 25 (MARRGRRSLASPAVAIALFVFLAYG) are cleaved as a signal peptide. A propeptide spanning residues 26-36 (GGGGGGGVCEA) is cleaved from the precursor. Disulfide bonds link cysteine 98/cysteine 399, cysteine 262/cysteine 274, and cysteine 297/cysteine 366. Asparagine 154 carries an N-linked (GlcNAc...) asparagine glycan. The active site involves serine 194. Asparagine 268 carries N-linked (GlcNAc...) asparagine glycosylation. The propeptide at 303–362 (IKKVTPANTKLPKSFQHLGTTTKPLAVRTRMHGRAWPLRAPVRAGRVPSWQEFARGSRPS) is linker peptide. An N-linked (GlcNAc...) asparagine glycan is attached at asparagine 418. Catalysis depends on residues aspartate 434 and histidine 487. The short motif at 508–510 (SKL) is the Microbody targeting signal element.

Belongs to the peptidase S10 family.

The catalysed reaction is Release of a C-terminal amino acid with broad specificity.. In Oryza sativa subsp. japonica (Rice), this protein is Serine carboxypeptidase 1 (CBP1).